Consider the following 802-residue polypeptide: Oleate activated transcription factor 3 (802 aa).

A DNA-binding region (zn(2)-C6 fungal-type) is located at residues 19-47 (CTNCKKRKSKCDRGKPCSNCTRIGIENSC). Residues 749–768 (TSQQDSLASAGTNRTNNIAT) show a composition bias toward polar residues. Positions 749–779 (TSQQDSLASAGTNRTNNIATNSGSGDDGGNG) are disordered.

It belongs to the OAF3 family.

Its subcellular location is the cytoplasm. The protein localises to the nucleus. The protein resides in the mitochondrion. Functionally, transcriptional inhibitor with a significantly increased number of target genes in response to oleate. This Vanderwaltozyma polyspora (strain ATCC 22028 / DSM 70294 / BCRC 21397 / CBS 2163 / NBRC 10782 / NRRL Y-8283 / UCD 57-17) (Kluyveromyces polysporus) protein is Oleate activated transcription factor 3 (OAF3).